The primary structure comprises 282 residues: 1D-myo-inositol 2-acetamido-2-deoxy-alpha-D-glucopyranoside deacetylase (282 aa).

Residues His-6, Asp-9, and His-141 each contribute to the Zn(2+) site.

This sequence belongs to the MshB deacetylase family. Zn(2+) serves as cofactor.

It carries out the reaction 1D-myo-inositol 2-acetamido-2-deoxy-alpha-D-glucopyranoside + H2O = 1D-myo-inositol 2-amino-2-deoxy-alpha-D-glucopyranoside + acetate. Its function is as follows. Catalyzes the deacetylation of 1D-myo-inositol 2-acetamido-2-deoxy-alpha-D-glucopyranoside (GlcNAc-Ins) in the mycothiol biosynthesis pathway. In Nocardiopsis dassonvillei (strain ATCC 23218 / DSM 43111 / CIP 107115 / JCM 7437 / KCTC 9190 / NBRC 14626 / NCTC 10488 / NRRL B-5397 / IMRU 509) (Actinomadura dassonvillei), this protein is 1D-myo-inositol 2-acetamido-2-deoxy-alpha-D-glucopyranoside deacetylase.